The chain runs to 105 residues: Large ribosomal subunit protein uL24 (105 aa).

Basic and acidic residues predominate over residues 77–93; that stretch reads DGKPTRVGYRKDDETGK. The tract at residues 77 to 105 is disordered; sequence DGKPTRVGYRKDDETGKNVRIAKSNGKDL.

Belongs to the universal ribosomal protein uL24 family. Part of the 50S ribosomal subunit.

In terms of biological role, one of two assembly initiator proteins, it binds directly to the 5'-end of the 23S rRNA, where it nucleates assembly of the 50S subunit. Its function is as follows. One of the proteins that surrounds the polypeptide exit tunnel on the outside of the subunit. The chain is Large ribosomal subunit protein uL24 from Mycolicibacterium gilvum (strain PYR-GCK) (Mycobacterium gilvum (strain PYR-GCK)).